The following is a 168-amino-acid chain: 6,7-dimethyl-8-ribityllumazine synthase (168 aa).

5-amino-6-(D-ribitylamino)uracil is bound by residues Trp31, 65–67 (SFE), and 90–92 (NVI). 95-96 (ET) provides a ligand contact to (2S)-2-hydroxy-3-oxobutyl phosphate. Residue His98 is the Proton donor of the active site. Phe123 contributes to the 5-amino-6-(D-ribitylamino)uracil binding site. Position 137 (Arg137) interacts with (2S)-2-hydroxy-3-oxobutyl phosphate.

Belongs to the DMRL synthase family.

The catalysed reaction is (2S)-2-hydroxy-3-oxobutyl phosphate + 5-amino-6-(D-ribitylamino)uracil = 6,7-dimethyl-8-(1-D-ribityl)lumazine + phosphate + 2 H2O + H(+). It participates in cofactor biosynthesis; riboflavin biosynthesis; riboflavin from 2-hydroxy-3-oxobutyl phosphate and 5-amino-6-(D-ribitylamino)uracil: step 1/2. Functionally, catalyzes the formation of 6,7-dimethyl-8-ribityllumazine by condensation of 5-amino-6-(D-ribitylamino)uracil with 3,4-dihydroxy-2-butanone 4-phosphate. This is the penultimate step in the biosynthesis of riboflavin. This chain is 6,7-dimethyl-8-ribityllumazine synthase, found in Christiangramia forsetii (strain DSM 17595 / CGMCC 1.15422 / KT0803) (Gramella forsetii).